The sequence spans 273 residues: Dermonecrotic toxin (273 aa).

2 residues coordinate Mg(2+): E20 and D22. H35 (nucleophile) is an active-site residue. A disulfide bond links C39 and C45. D79 is a Mg(2+) binding site.

The protein belongs to the arthropod phospholipase D family. Class I subfamily. Mg(2+) is required as a cofactor. In terms of tissue distribution, expressed by the venom gland.

It localises to the secreted. It carries out the reaction an N-(acyl)-sphingosylphosphocholine = an N-(acyl)-sphingosyl-1,3-cyclic phosphate + choline. It catalyses the reaction an N-(acyl)-sphingosylphosphoethanolamine = an N-(acyl)-sphingosyl-1,3-cyclic phosphate + ethanolamine. The enzyme catalyses a 1-acyl-sn-glycero-3-phosphocholine = a 1-acyl-sn-glycero-2,3-cyclic phosphate + choline. The catalysed reaction is a 1-acyl-sn-glycero-3-phosphoethanolamine = a 1-acyl-sn-glycero-2,3-cyclic phosphate + ethanolamine. Its function is as follows. Dermonecrotic toxins cleave the phosphodiester linkage between the phosphate and headgroup of certain phospholipids (sphingolipid and lysolipid substrates), forming an alcohol (often choline) and a cyclic phosphate. This toxin acts on sphingomyelin (SM). It may also act on ceramide phosphoethanolamine (CPE), lysophosphatidylcholine (LPC) and lysophosphatidylethanolamine (LPE), but not on lysophosphatidylserine (LPS), and lysophosphatidylglycerol (LPG). It acts by transphosphatidylation, releasing exclusively cyclic phosphate products as second products. Induces dermonecrosis, hemolysis, increased vascular permeability, edema, inflammatory response, and platelet aggregation. This is Dermonecrotic toxin from Loxosceles laeta (South American recluse spider).